The sequence spans 422 residues: Isocitrate dehydrogenase [NADP] (422 aa).

Thr94 is a binding site for NADP(+). The D-threo-isocitrate site is built by Ser103, Asn105, Arg109, Arg119, and Arg143. Asp310 is a Mg(2+) binding site. NADP(+)-binding positions include 344-350 (HGTAPKY), Asn357, Tyr396, and Arg400.

This sequence belongs to the isocitrate and isopropylmalate dehydrogenases family. As to quaternary structure, homodimer. Mg(2+) serves as cofactor. It depends on Mn(2+) as a cofactor.

It catalyses the reaction D-threo-isocitrate + NADP(+) = 2-oxoglutarate + CO2 + NADPH. Functionally, catalyzes the oxidative decarboxylation of isocitrate to 2-oxoglutarate and carbon dioxide with the concomitant reduction of NADP(+). The protein is Isocitrate dehydrogenase [NADP] (icd) of Staphylococcus aureus (strain MSSA476).